Reading from the N-terminus, the 293-residue chain is MDSQLANPPNAFNYIESHRDEYQLSHDLTEIILQFPSTASQLSARFSRSCMKIDHCVIEYRQQVPINATGSVVVEIHDKRMTDNESLQASWTFPIRCNIDLHYFSSSFFSLKDPIPWKLYYRVSDTNVHQRTHFAKFKGKLKLSTAKHSVDIPFRAPTVKILSKQFSNKDIDFSHVDYGKWERKLIRSASLSKYGLQGPIELKPGESWASKSTIGVSHLDADSDLDSAIHPYKNLNRLGSSVLDPGDSASIIGAQRAQSNITLSIAQLNEIVRSTVNECINNNCIHVQPKSLK.

The protein belongs to the begomovirus movement protein BC1 family. As to quaternary structure, binds to dimeric supercoiled plasmid DNA. Phosphorylated.

It is found in the host cell membrane. Its subcellular location is the host microsome membrane. The protein resides in the host endoplasmic reticulum membrane. In terms of biological role, transports viral genome to neighboring plant cells directly through plasmosdesmata, without any budding. The movement protein allows efficient cell to cell propagation, by bypassing the host cell wall barrier. Begomovirus genome is shuttled out of nucleus by Nuclear shuttle protein (NSP) and the movement protein transports the DNA-NSP complex to cell plasmodesmata and facilitates further movement across the cell wall. This chain is Movement protein BC1, found in Macroptilium lathyroides (Lima bean).